The sequence spans 545 residues: Chaperonin GroEL (545 aa).

Residues 29 to 32 (TIGP), 86 to 90 (DGTTT), G413, 478 to 480 (NAA), and D494 contribute to the ATP site.

This sequence belongs to the chaperonin (HSP60) family. Forms a cylinder of 14 subunits composed of two heptameric rings stacked back-to-back. Interacts with the co-chaperonin GroES.

It is found in the cytoplasm. The enzyme catalyses ATP + H2O + a folded polypeptide = ADP + phosphate + an unfolded polypeptide.. Together with its co-chaperonin GroES, plays an essential role in assisting protein folding. The GroEL-GroES system forms a nano-cage that allows encapsulation of the non-native substrate proteins and provides a physical environment optimized to promote and accelerate protein folding. This chain is Chaperonin GroEL, found in Exiguobacterium sibiricum (strain DSM 17290 / CCUG 55495 / CIP 109462 / JCM 13490 / 255-15).